Here is a 400-residue protein sequence, read N- to C-terminus: Acetate kinase (400 aa).

Mg(2+) is bound at residue Asn-10. Lys-17 provides a ligand contact to ATP. Residue Arg-91 participates in substrate binding. The active-site Proton donor/acceptor is Asp-150. ATP-binding positions include 210–214, 285–287, and 333–337; these read HLGNG, DCR, and GIGEN. Glu-387 contributes to the Mg(2+) binding site.

Belongs to the acetokinase family. In terms of assembly, homodimer. Mg(2+) serves as cofactor. It depends on Mn(2+) as a cofactor.

Its subcellular location is the cytoplasm. The enzyme catalyses acetate + ATP = acetyl phosphate + ADP. It functions in the pathway metabolic intermediate biosynthesis; acetyl-CoA biosynthesis; acetyl-CoA from acetate: step 1/2. Its function is as follows. Catalyzes the formation of acetyl phosphate from acetate and ATP. Can also catalyze the reverse reaction. The chain is Acetate kinase from Escherichia coli O157:H7.